Here is a 98-residue protein sequence, read N- to C-terminus: NADH-ubiquinone oxidoreductase chain 4L (98 aa).

A run of 3 helical transmembrane segments spans residues 1–21 (MSIT…GMFV), 29–49 (SLLC…IVSL), and 61–81 (VILL…LIMV).

Belongs to the complex I subunit 4L family. In terms of assembly, core subunit of respiratory chain NADH dehydrogenase (Complex I) which is composed of 45 different subunits.

The protein localises to the mitochondrion inner membrane. It carries out the reaction a ubiquinone + NADH + 5 H(+)(in) = a ubiquinol + NAD(+) + 4 H(+)(out). In terms of biological role, core subunit of the mitochondrial membrane respiratory chain NADH dehydrogenase (Complex I) which catalyzes electron transfer from NADH through the respiratory chain, using ubiquinone as an electron acceptor. Part of the enzyme membrane arm which is embedded in the lipid bilayer and involved in proton translocation. The sequence is that of NADH-ubiquinone oxidoreductase chain 4L (MT-ND4L) from Ochotona princeps (Southern American pika).